The primary structure comprises 317 residues: Acetyl-coenzyme A carboxylase carboxyl transferase subunit alpha (317 aa).

A CoA carboxyltransferase C-terminal domain is found at 33-294; that stretch reads NLDDEIARLQ…KQRLLDDLKE (262 aa).

It belongs to the AccA family. As to quaternary structure, acetyl-CoA carboxylase is a heterohexamer composed of biotin carboxyl carrier protein (AccB), biotin carboxylase (AccC) and two subunits each of ACCase subunit alpha (AccA) and ACCase subunit beta (AccD).

It localises to the cytoplasm. It catalyses the reaction N(6)-carboxybiotinyl-L-lysyl-[protein] + acetyl-CoA = N(6)-biotinyl-L-lysyl-[protein] + malonyl-CoA. Its pathway is lipid metabolism; malonyl-CoA biosynthesis; malonyl-CoA from acetyl-CoA: step 1/1. In terms of biological role, component of the acetyl coenzyme A carboxylase (ACC) complex. First, biotin carboxylase catalyzes the carboxylation of biotin on its carrier protein (BCCP) and then the CO(2) group is transferred by the carboxyltransferase to acetyl-CoA to form malonyl-CoA. This Pasteurella multocida (strain Pm70) protein is Acetyl-coenzyme A carboxylase carboxyl transferase subunit alpha.